Consider the following 267-residue polypeptide: Indole-3-glycerol phosphate synthase 1 (267 aa).

The protein belongs to the TrpC family.

It carries out the reaction 1-(2-carboxyphenylamino)-1-deoxy-D-ribulose 5-phosphate + H(+) = (1S,2R)-1-C-(indol-3-yl)glycerol 3-phosphate + CO2 + H2O. The protein operates within amino-acid biosynthesis; L-tryptophan biosynthesis; L-tryptophan from chorismate: step 4/5. The sequence is that of Indole-3-glycerol phosphate synthase 1 (trpC1) from Ralstonia nicotianae (strain ATCC BAA-1114 / GMI1000) (Ralstonia solanacearum).